The following is a 269-amino-acid chain: Phosphatidylglycerol--prolipoprotein diacylglyceryl transferase (269 aa).

A run of 3 helical transmembrane segments spans residues 21–41 (WYGI…VLEG), 54–74 (LLLY…VVFE), and 88–108 (IWDG…VILI). R136 lines the a 1,2-diacyl-sn-glycero-3-phospho-(1'-sn-glycerol) pocket. 2 helical membrane-spanning segments follow: residues 206–226 (GEVV…IEGM) and 236–256 (LRVS…AIFY).

Belongs to the Lgt family.

It is found in the cell membrane. The catalysed reaction is L-cysteinyl-[prolipoprotein] + a 1,2-diacyl-sn-glycero-3-phospho-(1'-sn-glycerol) = an S-1,2-diacyl-sn-glyceryl-L-cysteinyl-[prolipoprotein] + sn-glycerol 1-phosphate + H(+). It functions in the pathway protein modification; lipoprotein biosynthesis (diacylglyceryl transfer). Functionally, catalyzes the transfer of the diacylglyceryl group from phosphatidylglycerol to the sulfhydryl group of the N-terminal cysteine of a prolipoprotein, the first step in the formation of mature lipoproteins. The chain is Phosphatidylglycerol--prolipoprotein diacylglyceryl transferase from Ligilactobacillus salivarius (strain UCC118) (Lactobacillus salivarius).